Consider the following 401-residue polypeptide: 8-amino-7-oxononanoate synthase (401 aa).

Arginine 24 is a binding site for substrate. 111-112 is a pyridoxal 5'-phosphate binding site; the sequence is GF. Histidine 137 is a binding site for substrate. Residues serine 183, histidine 211, and threonine 240 each contribute to the pyridoxal 5'-phosphate site. Lysine 243 carries the N6-(pyridoxal phosphate)lysine modification. Threonine 357 serves as a coordination point for substrate.

It belongs to the class-II pyridoxal-phosphate-dependent aminotransferase family. BioF subfamily. As to quaternary structure, homodimer. It depends on pyridoxal 5'-phosphate as a cofactor.

It catalyses the reaction 6-carboxyhexanoyl-[ACP] + L-alanine + H(+) = (8S)-8-amino-7-oxononanoate + holo-[ACP] + CO2. It participates in cofactor biosynthesis; biotin biosynthesis. Its function is as follows. Catalyzes the decarboxylative condensation of pimeloyl-[acyl-carrier protein] and L-alanine to produce 8-amino-7-oxononanoate (AON), [acyl-carrier protein], and carbon dioxide. The polypeptide is 8-amino-7-oxononanoate synthase (Xanthomonas campestris pv. campestris (strain 8004)).